Consider the following 346-residue polypeptide: Annexin A1 (346 aa).

An N-acetylalanine modification is found at A2. Phosphoserine; by TRPM7 is present on S5. Q19 participates in a covalent cross-link: Isoglutamyl lysine isopeptide (Gln-Lys) (interchain with K-?). Y21 carries the post-translational modification Phosphotyrosine; by EGFR. S27 bears the Phosphoserine; by PKC mark. A phosphoserine mark is found at S34 and S37. Position 41 is a phosphothreonine (T41). Annexin repeat units lie at residues 42-113 (FNPS…ALLK), 114-185 (TPAQ…SLAK), 197-269 (DLAD…AIVK), and 273-344 (SKPA…ALCG). K58 carries the post-translational modification N6-acetyllysine. G59, V60, E62, K97, L100, E105, M127, G129, G131, T132, and E134 together coordinate Ca(2+). Residue T136 is modified to Phosphothreonine. Residues D171, G210, and R213 each coordinate Ca(2+). K214 participates in a covalent cross-link: Glycyl lysine isopeptide (Lys-Gly) (interchain with G-Cter in SUMO1); alternate. A Glycyl lysine isopeptide (Lys-Gly) (interchain with G-Cter in SUMO2); alternate cross-link involves residue K214. G215 provides a ligand contact to Ca(2+). K239 is subject to N6-acetyllysine. Positions 253, 255, and 256 each coordinate Ca(2+). K257 participates in a covalent cross-link: Glycyl lysine isopeptide (Lys-Gly) (interchain with G-Cter in SUMO1). The Ca(2+) site is built by E261, M286, G288, and G290. K312 is modified (N6-acetyllysine). An intrachain disulfide couples C324 to C343. Positions 328, 330, and 331 each coordinate Ca(2+). K332 is covalently cross-linked (Glycyl lysine isopeptide (Lys-Gly) (interchain with G-Cter in SUMO1)). E336 lines the Ca(2+) pocket.

This sequence belongs to the annexin family. As to quaternary structure, homodimer; non-covalently linked. Homodimer; linked by transglutamylation. Homodimers linked by transglutamylation are observed in placenta, but not in other tissues. Interacts with S100A11. Heterotetramer, formed by two molecules each of S100A11 and ANXA1. Interacts with DYSF. Interacts with EGFR. Phosphorylated by protein kinase C, EGFR and TRPM7. Phosphorylated in response to EGF treatment. Post-translationally, sumoylated. In terms of processing, proteolytically cleaved by cathepsin CTSG to release the active N-terminal peptide Ac2-26.

The protein resides in the nucleus. It is found in the cytoplasm. It localises to the cell projection. Its subcellular location is the cilium. The protein localises to the basolateral cell membrane. The protein resides in the lateral cell membrane. It is found in the cell membrane. It localises to the apical cell membrane. Its subcellular location is the membrane. The protein localises to the early endosome. The protein resides in the cytoplasmic vesicle membrane. It is found in the endosome membrane. It localises to the secreted. Its subcellular location is the extracellular space. The protein localises to the extracellular exosome. The protein resides in the cytoplasmic vesicle. It is found in the secretory vesicle lumen. It localises to the phagocytic cup. In terms of biological role, plays important roles in the innate immune response as effector of glucocorticoid-mediated responses and regulator of the inflammatory process. Has anti-inflammatory activity. Plays a role in glucocorticoid-mediated down-regulation of the early phase of the inflammatory response. Contributes to the adaptive immune response by enhancing signaling cascades that are triggered by T-cell activation, regulates differentiation and proliferation of activated T-cells. Promotes the differentiation of T-cells into Th1 cells and negatively regulates differentiation into Th2 cells. Has no effect on unstimulated T-cells. Negatively regulates hormone exocytosis via activation of the formyl peptide receptors and reorganization of the actin cytoskeleton. Has high affinity for Ca(2+) and can bind up to eight Ca(2+) ions. Displays Ca(2+)-dependent binding to phospholipid membranes. Plays a role in the formation of phagocytic cups and phagosomes. Plays a role in phagocytosis by mediating the Ca(2+)-dependent interaction between phagosomes and the actin cytoskeleton. Functionally, functions at least in part by activating the formyl peptide receptors and downstream signaling cascades. Promotes chemotaxis of granulocytes and monocytes via activation of the formyl peptide receptors. Promotes rearrangement of the actin cytoskeleton, cell polarization and cell migration. Promotes resolution of inflammation and wound healing. Acts via neutrophil N-formyl peptide receptors to enhance the release of CXCL2. The sequence is that of Annexin A1 (ANXA1) from Pan troglodytes (Chimpanzee).